A 143-amino-acid polypeptide reads, in one-letter code: Na(+)/H(+) antiporter subunit B (143 aa).

The next 4 helical transmembrane spans lie at Leu9 to Leu31, Ala36 to Tyr58, Phe71 to Gly93, and Ala117 to Ile139.

This sequence belongs to the CPA3 antiporters (TC 2.A.63) subunit B family. Forms a heterooligomeric complex that consists of seven subunits: MrpA, MrpB, MrpC, MrpD, MrpE, MrpF and MrpG.

The protein resides in the cell membrane. In terms of biological role, mrp complex is a Na(+)/H(+) antiporter that is considered to be the major Na(+) excretion system in B.subtilis. Has a major role in Na(+) resistance and a minor role in Na(+)- and K(+)-dependent pH homeostasis as compared to TetB. MrpA may be the actual Na(+)/H(+) antiporter, although the six other Mrp proteins are all required for Na(+)/H(+) antiport activity and Na(+) resistance. MrpA is required for initiation of sporulation when external Na(+) concentration increases. Also transports Li(+) but not K(+), Ca(2+) or Mg(2+). The polypeptide is Na(+)/H(+) antiporter subunit B (mrpB) (Bacillus subtilis (strain 168)).